Here is a 150-residue protein sequence, read N- to C-terminus: 3-dehydroquinate dehydratase (150 aa).

The Proton acceptor role is filled by Tyr-25. Substrate contacts are provided by Asn-76, His-82, and Asp-89. Residue His-102 is the Proton donor of the active site. Residues 103–104 (LS) and Arg-113 contribute to the substrate site.

Belongs to the type-II 3-dehydroquinase family. As to quaternary structure, homododecamer.

It carries out the reaction 3-dehydroquinate = 3-dehydroshikimate + H2O. It participates in metabolic intermediate biosynthesis; chorismate biosynthesis; chorismate from D-erythrose 4-phosphate and phosphoenolpyruvate: step 3/7. In terms of biological role, catalyzes a trans-dehydration via an enolate intermediate. This chain is 3-dehydroquinate dehydratase, found in Trichodesmium erythraeum (strain IMS101).